The chain runs to 459 residues: Cobyrinate a,c-diamide synthase (459 aa).

In terms of domain architecture, GATase cobBQ-type spans Arg249–Gly446. Cys332 (nucleophile) is an active-site residue.

It belongs to the CobB/CbiA family. Mg(2+) is required as a cofactor.

It carries out the reaction cob(II)yrinate + 2 L-glutamine + 2 ATP + 2 H2O = cob(II)yrinate a,c diamide + 2 L-glutamate + 2 ADP + 2 phosphate + 2 H(+). The protein operates within cofactor biosynthesis; adenosylcobalamin biosynthesis; cob(II)yrinate a,c-diamide from sirohydrochlorin (anaerobic route): step 10/10. In terms of biological role, catalyzes the ATP-dependent amidation of the two carboxylate groups at positions a and c of cobyrinate, using either L-glutamine or ammonia as the nitrogen source. The sequence is that of Cobyrinate a,c-diamide synthase from Syntrophotalea carbinolica (strain DSM 2380 / NBRC 103641 / GraBd1) (Pelobacter carbinolicus).